The primary structure comprises 167 residues: Ribosome maturation factor RimM (167 aa).

The PRC barrel domain maps to 94 to 165 (ENEFYYSDII…KIIITPMEGL (72 aa)).

The protein belongs to the RimM family. In terms of assembly, binds ribosomal protein uS19.

The protein localises to the cytoplasm. Functionally, an accessory protein needed during the final step in the assembly of 30S ribosomal subunit, possibly for assembly of the head region. Essential for efficient processing of 16S rRNA. May be needed both before and after RbfA during the maturation of 16S rRNA. It has affinity for free ribosomal 30S subunits but not for 70S ribosomes. This chain is Ribosome maturation factor RimM, found in Staphylococcus aureus (strain MRSA252).